We begin with the raw amino-acid sequence, 159 residues long: Small ribosomal subunit protein uS4 (159 aa).

Positions 106–158 (RRLQTIVYRMGLAKSIYHARQLIVHGHIAIEGRRVTSPGFLVPRELEDKITLV) constitute an S4 RNA-binding domain.

Belongs to the universal ribosomal protein uS4 family. As to quaternary structure, part of the 30S ribosomal subunit. Contacts protein S5. The interaction surface between S4 and S5 is involved in control of translational fidelity.

In terms of biological role, one of the primary rRNA binding proteins, it binds directly to 16S rRNA where it nucleates assembly of the body of the 30S subunit. Functionally, with S5 and S12 plays an important role in translational accuracy. This is Small ribosomal subunit protein uS4 from Pyrobaculum arsenaticum (strain DSM 13514 / JCM 11321 / PZ6).